The sequence spans 316 residues: NAC domain-containing protein 22 (316 aa).

In terms of domain architecture, NAC spans 17–170 (DLPGFRFHPT…DMVLCKIYRK (154 aa)). Residues 117–176 (IGLKKTLVFYQGRAPRGTKTDWVMNEYRLPDYGAARAAAPPPKEDMVLCKIYRKATPLKE) mediate DNA binding. The tract at residues 229–260 (QSSSSSAAPSGSSSKNGGAGAPREAKKEEADV) is disordered. The span at 230–244 (SSSSSAAPSGSSSKN) shows a compositional bias: low complexity.

It localises to the nucleus. Functionally, transcription activator that binds sequence-specific DNA motifs. Involved in stress response. Plays a positive role in drought and salt stress tolerance through the modulation of abscisic acid-mediated signaling. This Oryza sativa subsp. japonica (Rice) protein is NAC domain-containing protein 22.